A 503-amino-acid polypeptide reads, in one-letter code: Aspartyl/glutamyl-tRNA(Asn/Gln) amidotransferase subunit B (503 aa).

Belongs to the GatB/GatE family. GatB subfamily. Heterotrimer of A, B and C subunits.

It catalyses the reaction L-glutamyl-tRNA(Gln) + L-glutamine + ATP + H2O = L-glutaminyl-tRNA(Gln) + L-glutamate + ADP + phosphate + H(+). The catalysed reaction is L-aspartyl-tRNA(Asn) + L-glutamine + ATP + H2O = L-asparaginyl-tRNA(Asn) + L-glutamate + ADP + phosphate + 2 H(+). Allows the formation of correctly charged Asn-tRNA(Asn) or Gln-tRNA(Gln) through the transamidation of misacylated Asp-tRNA(Asn) or Glu-tRNA(Gln) in organisms which lack either or both of asparaginyl-tRNA or glutaminyl-tRNA synthetases. The reaction takes place in the presence of glutamine and ATP through an activated phospho-Asp-tRNA(Asn) or phospho-Glu-tRNA(Gln). In Cereibacter sphaeroides (strain ATCC 17023 / DSM 158 / JCM 6121 / CCUG 31486 / LMG 2827 / NBRC 12203 / NCIMB 8253 / ATH 2.4.1.) (Rhodobacter sphaeroides), this protein is Aspartyl/glutamyl-tRNA(Asn/Gln) amidotransferase subunit B.